The following is a 446-amino-acid chain: Phosphoglucosamine mutase (446 aa).

S101 (phosphoserine intermediate) is an active-site residue. The Mg(2+) site is built by S101, D240, D242, and D244. At S101 the chain carries Phosphoserine.

It belongs to the phosphohexose mutase family. It depends on Mg(2+) as a cofactor. Activated by phosphorylation.

It carries out the reaction alpha-D-glucosamine 1-phosphate = D-glucosamine 6-phosphate. Its function is as follows. Catalyzes the conversion of glucosamine-6-phosphate to glucosamine-1-phosphate. In Pseudomonas putida (strain ATCC 700007 / DSM 6899 / JCM 31910 / BCRC 17059 / LMG 24140 / F1), this protein is Phosphoglucosamine mutase.